Here is a 272-residue protein sequence, read N- to C-terminus: ATP-dependent Clp protease proteolytic subunit, mitochondrial (272 aa).

Residues 1–52 (MWPRVLLGEARVAVDGCRALLSRLAVHFSPPWTAVSCSPLRRSLHGTATRAF) constitute a mitochondrion transit peptide. Ser-149 acts as the Nucleophile in catalysis. The active site involves His-174. Lys-196 bears the N6-succinyllysine mark. Lys-207 carries the N6-acetyllysine modification. Positions 240 to 272 (VLVHPPQDGEDEPELVQKETATAPTDPPAPTST) are disordered.

The protein belongs to the peptidase S14 family. Fourteen CLPP subunits assemble into 2 heptameric rings which stack back to back to give a disk-like structure with a central cavity. Component of the ClpXP complex formed by the assembly of two CLPP heptameric rings with two CLPX hexameric rings, giving rise to a symmetrical structure with two central CLPP rings flanked by a CLPX ring at either end of the complex. As to expression, detected in liver (at protein level). High levels found in heart, liver and skeletal muscle.

It is found in the mitochondrion matrix. The catalysed reaction is Hydrolysis of proteins to small peptides in the presence of ATP and magnesium. alpha-casein is the usual test substrate. In the absence of ATP, only oligopeptides shorter than five residues are hydrolyzed (such as succinyl-Leu-Tyr-|-NHMec, and Leu-Tyr-Leu-|-Tyr-Trp, in which cleavage of the -Tyr-|-Leu- and -Tyr-|-Trp bonds also occurs).. Protease component of the ClpXP complex that cleaves peptides and various proteins in an ATP-dependent process. Has low peptidase activity in the absence of CLPX. The ClpXP complex can degrade CSN1S1, CSN2 and CSN3, as well as synthetic peptides (in vitro) and may be responsible for a fairly general and central housekeeping function rather than for the degradation of specific substrates. Cleaves PINK1 in the mitochondrion. The chain is ATP-dependent Clp protease proteolytic subunit, mitochondrial from Mus musculus (Mouse).